The chain runs to 103 residues: Putative membrane protein insertion efficiency factor (103 aa).

Residues 68 to 103 are disordered; the sequence is HEGGYDPVPLAKQDAKPENNSESESLLNQPTETKSL. A compositionally biased stretch (polar residues) spans 87–103; that stretch reads NSESESLLNQPTETKSL.

Belongs to the UPF0161 family.

It localises to the cell inner membrane. In terms of biological role, could be involved in insertion of integral membrane proteins into the membrane. The polypeptide is Putative membrane protein insertion efficiency factor (Idiomarina loihiensis (strain ATCC BAA-735 / DSM 15497 / L2-TR)).